A 404-amino-acid polypeptide reads, in one-letter code: Argininosuccinate synthase (404 aa).

ATP-binding positions include 11-19 and Ala40; that span reads AYSGGLDTS. L-citrulline contacts are provided by Tyr92 and Ser97. Gly122 provides a ligand contact to ATP. L-aspartate-binding residues include Thr124, Asn128, and Asp129. Residue Asn128 coordinates L-citrulline. Residues Arg132, Ser181, Ser190, Glu266, and Tyr278 each contribute to the L-citrulline site.

This sequence belongs to the argininosuccinate synthase family. Type 1 subfamily. Homotetramer.

The protein localises to the cytoplasm. The enzyme catalyses L-citrulline + L-aspartate + ATP = 2-(N(omega)-L-arginino)succinate + AMP + diphosphate + H(+). It participates in amino-acid biosynthesis; L-arginine biosynthesis; L-arginine from L-ornithine and carbamoyl phosphate: step 2/3. The chain is Argininosuccinate synthase from Moritella abyssi.